The sequence spans 125 residues: Small ribosomal subunit protein uS12 (125 aa).

At Asp89 the chain carries 3-methylthioaspartic acid. Residues Ser101 to Ala125 are disordered. Residues Ser113–Ala125 show a composition bias toward basic residues.

It belongs to the universal ribosomal protein uS12 family. In terms of assembly, part of the 30S ribosomal subunit. Contacts proteins S8 and S17. May interact with IF1 in the 30S initiation complex.

Its function is as follows. With S4 and S5 plays an important role in translational accuracy. Interacts with and stabilizes bases of the 16S rRNA that are involved in tRNA selection in the A site and with the mRNA backbone. Located at the interface of the 30S and 50S subunits, it traverses the body of the 30S subunit contacting proteins on the other side and probably holding the rRNA structure together. The combined cluster of proteins S8, S12 and S17 appears to hold together the shoulder and platform of the 30S subunit. The sequence is that of Small ribosomal subunit protein uS12 from Thiobacillus denitrificans (strain ATCC 25259 / T1).